Consider the following 218-residue polypeptide: Large ribosomal subunit protein uL3 (218 aa).

Belongs to the universal ribosomal protein uL3 family. Part of the 50S ribosomal subunit. Forms a cluster with proteins L14 and L19.

In terms of biological role, one of the primary rRNA binding proteins, it binds directly near the 3'-end of the 23S rRNA, where it nucleates assembly of the 50S subunit. This is Large ribosomal subunit protein uL3 from Corynebacterium aurimucosum (strain ATCC 700975 / DSM 44827 / CIP 107346 / CN-1) (Corynebacterium nigricans).